The chain runs to 1256 residues: MRTRLAGTSEDGHLCPVEAPFPNVDFLLHQQLQQEQDVYANSTTNATASPPIAPTSVLPRPSRPSQSSAAERTSPESPSVRQSPTKRDRNPGPSSISGAGPLNLEHQSPSQQSQNQQQQQQQQQQQQQQQQQQQSFYARSRRSGNFNWKLSHSRNGSIEKPPPSFFSSSFSHSPSTPPLSLGAPANGAAHSKEMEKEEEQKFVGKRPRIRSPWAITFVTLLISILGIGFLALVLNSSFTRHIDPKGCRMSYMRPGYAKFDDFDTEHTRFASKYSLYLYRELGIENDAKVRGVPVLFIPGNAGSYKQVRPIAAEAANYFHDVLQQDESAVKAGARSLDFFTVDFNEDITAFHGQTLLDQAEYLNEAIRYILSLYLDRTRSDRDPNLPDPTSVIVLGHSMGGVVARTMLIMPNYQANSINTIITMSAPHARPPVSFDSEIVKTYKDINDYWRRAYSQQWANNNPLWHVTLVSIAGGGLDTVVPSDYASVESLVPDTHGFTVFTTSIPNVWTSMDHAAILWCDQFRKALVKAIFDVVDVNRAAQTKPRADRMRVFKRWFLTGMEEVAEKTVPSKDPSTLLTLEDNLSSVIAQGERLVLRSLGASGAVRAHLLPIPPSGSPEAKRFTLLTDHKLDVSSESGRLEVLFCSVFPMQPGQAVAGFAAQINLAGDSSASTRLACNNAASDVVTLPASLRSSQYPFSKEGEPPKTHFSYLQYDVEDIAEHQYVAVIEKTHTPTPGFVIAEFSDVSQSHRTRHISLRRLLAFGMKFRLPSSRPMVSELKVPTMQSSLLAYNLEISEQNCGKQQELFAPLIRQYLTEPYESKFFVNAREAAVSIHGVAPYVPPPLKSRSTEDGLSFQFWTDPTCASNINIKMSIDVMGSLGKLYMRYRTVFAAFPLLVVTLVLRKQFRIYDTTGVFISFSESLDLCLRQSIPLVLAFLTFLSLFIWNSSSSATANIWNWANVTSGAIDFHQNDLLIGTQDPFFWFLVPVIGLICVGICTVFNYMTLTLVHILSTAVSLLSFRPGWIRNDERRKALPLPAFYPTSPRRRMVTTAILLVLVSTLIPYQFAYLVCCLVQLTTTVRAQRLASDLRSAANSNFYNYVHSILLLMLWILPINLPILVVWIHNLAVHWLTPFSSHHNVLSIMPFIILVETLTTGKMVPRVNSRFKHFTSVLLFGIALYAAIYGVSYAYMLHYLVNLVAAWLAIVHSTSDNWSVLSGIKHISCTLFDAGNTNNVGGVNGTNNTMLAEDCKMRKEP.

Positions 37 to 48 are enriched in polar residues; that stretch reads DVYANSTTNATA. The segment at 37-203 is disordered; the sequence is DVYANSTTNA…MEKEEEQKFV (167 aa). Asn41 and Asn45 each carry an N-linked (GlcNAc...) asparagine glycan. The segment covering 59-68 has biased composition (low complexity); the sequence is PRPSRPSQSS. The segment covering 69-83 has biased composition (polar residues); it reads AAERTSPESPSVRQS. The segment covering 107-135 has biased composition (low complexity); that stretch reads QSPSQQSQNQQQQQQQQQQQQQQQQQQQS. Over residues 143–156 the composition is skewed to polar residues; the sequence is SGNFNWKLSHSRNG. Asn155 carries an N-linked (GlcNAc...) asparagine glycan. The segment covering 165–180 has biased composition (low complexity); sequence FFSSSFSHSPSTPPLS. Positions 190–202 are enriched in basic and acidic residues; the sequence is HSKEMEKEEEQKF. A helical transmembrane segment spans residues 214–234; it reads AITFVTLLISILGIGFLALVL. Asn235 carries N-linked (GlcNAc...) asparagine glycosylation. Ser397 is an active-site residue. An N-linked (GlcNAc...) asparagine glycan is attached at Asn582. The next 2 membrane-spanning stretches (helical) occupy residues 882–902 and 929–949; these read LYMRYRTVFAAFPLLVVTLVL and SIPLVLAFLTFLSLFIWNSSS. N-linked (GlcNAc...) asparagine glycosylation is present at Asn960. 6 helical membrane passes run 980–1000, 1005–1025, 1053–1073, 1103–1123, 1130–1150, and 1172–1192; these read PFFWFLVPVIGLICVGICTVF, LTLVHILSTAVSLLSFRPGWI, ILLVLVSTLIPYQFAYLVCCL, SILLLMLWILPINLPILVVWI, WLTPFSSHHNVLSIMPFIILV, and VLLFGIALYAAIYGVSYAYML. N-linked (GlcNAc...) asparagine glycans are attached at residues Asn1212, Asn1239, and Asn1242.

The protein belongs to the GPI inositol-deacylase family.

Its subcellular location is the endoplasmic reticulum membrane. Its function is as follows. Involved in inositol deacylation of GPI-anchored proteins which plays important roles in the quality control and ER-associated degradation of GPI-anchored proteins. The protein is GPI inositol-deacylase (bst-1) of Neurospora crassa (strain ATCC 24698 / 74-OR23-1A / CBS 708.71 / DSM 1257 / FGSC 987).